We begin with the raw amino-acid sequence, 150 residues long: Large ribosomal subunit protein bL9 (150 aa).

This sequence belongs to the bacterial ribosomal protein bL9 family.

Binds to the 23S rRNA. The sequence is that of Large ribosomal subunit protein bL9 from Paracidovorax citrulli (strain AAC00-1) (Acidovorax citrulli).